The sequence spans 54 residues: Rubredoxin (54 aa).

The 51-residue stretch at 2–52 (AKWVCKICGYIYDEDAGDPDNGISPGTKFEELPDDWVCPICGAPKSEFEKL) folds into the Rubredoxin-like domain. Fe cation is bound by residues cysteine 6, cysteine 9, cysteine 39, and cysteine 42.

Belongs to the rubredoxin family. Fe(3+) is required as a cofactor.

In terms of biological role, rubredoxin is a small nonheme, iron protein lacking acid-labile sulfide. Its single Fe, chelated to 4 Cys, functions as an electron acceptor and may also stabilize the conformation of the molecule. This chain is Rubredoxin (rub), found in Pyrococcus furiosus (strain ATCC 43587 / DSM 3638 / JCM 8422 / Vc1).